The chain runs to 242 residues: DNA repair protein RecO (242 aa).

The protein belongs to the RecO family. As to quaternary structure, monomer.

Its function is as follows. Involved in DNA repair and RecF pathway recombination. This chain is DNA repair protein RecO, found in Salmonella schwarzengrund (strain CVM19633).